The primary structure comprises 246 residues: PF03932 family protein CutC (246 aa).

The protein belongs to the CutC family.

The protein resides in the cytoplasm. This chain is PF03932 family protein CutC, found in Treponema denticola (strain ATCC 35405 / DSM 14222 / CIP 103919 / JCM 8153 / KCTC 15104).